The chain runs to 246 residues: Ribonuclease PH (246 aa).

Residues arginine 91 and 129–131 (GTR) contribute to the phosphate site.

The protein belongs to the RNase PH family. Homohexameric ring arranged as a trimer of dimers.

It catalyses the reaction tRNA(n+1) + phosphate = tRNA(n) + a ribonucleoside 5'-diphosphate. Functionally, phosphorolytic 3'-5' exoribonuclease that plays an important role in tRNA 3'-end maturation. Removes nucleotide residues following the 3'-CCA terminus of tRNAs; can also add nucleotides to the ends of RNA molecules by using nucleoside diphosphates as substrates, but this may not be physiologically important. Probably plays a role in initiation of 16S rRNA degradation (leading to ribosome degradation) during starvation. The polypeptide is Ribonuclease PH (Burkholderia cenocepacia (strain ATCC BAA-245 / DSM 16553 / LMG 16656 / NCTC 13227 / J2315 / CF5610) (Burkholderia cepacia (strain J2315))).